The chain runs to 95 residues: Mammaglobin-B (95 aa).

A signal peptide spans 1–18; that stretch reads MKLLMVLMLAALLLHCYA. Asn-68 is a glycosylation site (N-linked (GlcNAc...) asparagine).

As to quaternary structure, heterodimer of a lipophilin A and a lipophilin C (mammaglobin B) monomer associated head to head. As to expression, expressed in thymus, trachea, kidney, steroid responsive tissues (prostate, testis, uterus, breast and ovary) and salivary gland.

It is found in the secreted. May bind androgens and other steroids, may also bind estramustine, a chemotherapeutic agent used for prostate cancer. May be under transcriptional regulation of steroid hormones. This is Mammaglobin-B (SCGB2A1) from Homo sapiens (Human).